A 52-amino-acid chain; its full sequence is Lysis protein for colicin N (52 aa).

A signal peptide spans 1–17 (MCGKILLILFFIMTLSA). C18 carries the N-palmitoyl cysteine lipid modification. The S-diacylglycerol cysteine moiety is linked to residue C18.

The protein resides in the cell outer membrane. Lysis proteins are required for both colicin release and partial cell lysis. In Escherichia coli, this protein is Lysis protein for colicin N (cnl).